The primary structure comprises 463 residues: MATYPCQLCGKTFLTLEKFTIHNYSHSRERPYKCLQPDCGKAFISRYKLMRHMATHSPQKSHQCAHCEKTFNRKDHLKNHLQTHDPNKMAFGCEECGKKYNTMLGYKRHLALHAASSGDLTCGVCALELGSTEVLLDHLKAHAEEKPPSGTKEKKHQCDHCERCFYTRKDVRRHLVVHTGCKDFLCQFCAQRFGRKDHLTRHTKKTHSQELMKESLQSGDLLSTFHSISPQFQLKAAPLSPFPLGAPAQNGLASSLPAEVHSHTHNPSEQTSQPVQALPELLAPLHPVAPPTSPPQPLQNHKYNTSSTSYSPLASLPLKADTKGFCNTNLLEDLPLQEPQSPHKLNPGFDLAKGGAGKVNLPKELPADAVNLTIPASLDLSPLLGFWQLPPPATQNAFGNSTLTLGPGESLPHRLSCLGQQQQDPSLAMSTMSLGQLPLPPIPHVFPAGTGSAILPHFHHAFR.

7 consecutive C2H2-type zinc fingers follow at residues 4 to 26 (YPCQ…NYSH), 32 to 56 (YKCL…MATH), 62 to 84 (HQCA…LQTH), 91 to 113 (FGCE…LALH), 120 to 142 (LTCG…LKAH), 156 to 178 (HQCD…LVVH), and 184 to 207 (FLCQ…KKTH). The tract at residues 285 to 310 (LHPVAPPTSPPQPLQNHKYNTSSTSY) is disordered. Residues 287–297 (PVAPPTSPPQP) are compositionally biased toward pro residues. Residues 298–310 (LQNHKYNTSSTSY) are compositionally biased toward polar residues.

Belongs to the krueppel C2H2-type zinc-finger protein family. Interacts with THRSP.

The protein localises to the nucleus. Acts as a transcriptional activator. Involved in the transcriptional regulation of type 1 receptor for pituitary adenylate cyclase-activating polypeptide. This Sus scrofa (Pig) protein is Zinc finger protein PLAGL1 (PLAGL1).